The chain runs to 960 residues: UPF0182 protein DSY1630 (960 aa).

Transmembrane regions (helical) follow at residues 7–27 (IMLV…GLFE), 50–70 (IIQI…LFSI), 105–125 (TLWL…VTGF), 169–189 (FGPL…AGVI), 212–232 (LALL…FDTF), 256–276 (ALKA…LAFF), and 285–305 (LPIL…PMVL). Disordered regions lie at residues 866–899 (SALA…QEDT) and 924–960 (TGDS…KTNP). Positions 881-897 (ETEETTEETEEPVDPQE) are enriched in acidic residues. The segment covering 931–944 (EGGKKADEDAHDVQ) has biased composition (basic and acidic residues). Positions 950 to 960 (SVSSEQSKTNP) are enriched in polar residues.

Belongs to the UPF0182 family.

Its subcellular location is the cell membrane. This Desulfitobacterium hafniense (strain Y51) protein is UPF0182 protein DSY1630.